The chain runs to 157 residues: Transcription antitermination protein NusB (157 aa).

Belongs to the NusB family.

In terms of biological role, involved in transcription antitermination. Required for transcription of ribosomal RNA (rRNA) genes. Binds specifically to the boxA antiterminator sequence of the ribosomal RNA (rrn) operons. The sequence is that of Transcription antitermination protein NusB from Xylella fastidiosa (strain M12).